The primary structure comprises 995 residues: uncharacterized protein (995 aa).

An N-terminal signal peptide occupies residues 1 to 30 (MFIHRMKSNLASLFLSFFLLLACEFTFSYA). 6 N-linked (GlcNAc...) asparagine glycosylation sites follow: Asn115, Asn162, Asn225, Asn422, Asn478, and Asn486. Glu502 is an active-site residue. 2 N-linked (GlcNAc...) asparagine glycosylation sites follow: Asn546 and Asn611. Asp669 acts as the Proton donor in catalysis. 4 N-linked (GlcNAc...) asparagine glycosylation sites follow: Asn670, Asn823, Asn843, and Asn986.

This sequence belongs to the glycosyl hydrolase 31 family.

It is found in the spore wall. This is an uncharacterized protein from Schizosaccharomyces pombe (strain 972 / ATCC 24843) (Fission yeast).